A 310-amino-acid polypeptide reads, in one-letter code: D-alanine--D-alanine ligase (310 aa).

The 199-residue stretch at 107–305 (KKVWQSAGLP…FSALVQSILA (199 aa)) folds into the ATP-grasp domain. 134–189 (EQLHCQDFVIKPALEGSSVGVSRVKNQEQLAAAIPFAGGARAKIMAEPWIVGRELT) lines the ATP pocket. D259, E272, and N274 together coordinate Mg(2+).

The protein belongs to the D-alanine--D-alanine ligase family. It depends on Mg(2+) as a cofactor. Requires Mn(2+) as cofactor.

Its subcellular location is the cytoplasm. It carries out the reaction 2 D-alanine + ATP = D-alanyl-D-alanine + ADP + phosphate + H(+). It functions in the pathway cell wall biogenesis; peptidoglycan biosynthesis. Functionally, cell wall formation. This is D-alanine--D-alanine ligase from Dichelobacter nodosus (strain VCS1703A).